The sequence spans 314 residues: uncharacterized protein (314 aa).

It belongs to the carbohydrate kinase PfkB family.

This is an uncharacterized protein from Buchnera aphidicola subsp. Schizaphis graminum (strain Sg).